Here is a 106-residue protein sequence, read N- to C-terminus: Large ribosomal subunit protein uL24 (106 aa).

This sequence belongs to the universal ribosomal protein uL24 family. In terms of assembly, part of the 50S ribosomal subunit.

In terms of biological role, one of two assembly initiator proteins, it binds directly to the 5'-end of the 23S rRNA, where it nucleates assembly of the 50S subunit. Functionally, one of the proteins that surrounds the polypeptide exit tunnel on the outside of the subunit. The chain is Large ribosomal subunit protein uL24 from Clostridium tetani (strain Massachusetts / E88).